The following is a 282-amino-acid chain: UDP-3-O-acyl-N-acetylglucosamine deacetylase (282 aa).

Positions 74, 226, and 230 each coordinate Zn(2+). His-253 functions as the Proton donor in the catalytic mechanism.

It belongs to the LpxC family. Zn(2+) is required as a cofactor.

It carries out the reaction a UDP-3-O-[(3R)-3-hydroxyacyl]-N-acetyl-alpha-D-glucosamine + H2O = a UDP-3-O-[(3R)-3-hydroxyacyl]-alpha-D-glucosamine + acetate. It participates in glycolipid biosynthesis; lipid IV(A) biosynthesis; lipid IV(A) from (3R)-3-hydroxytetradecanoyl-[acyl-carrier-protein] and UDP-N-acetyl-alpha-D-glucosamine: step 2/6. Catalyzes the hydrolysis of UDP-3-O-myristoyl-N-acetylglucosamine to form UDP-3-O-myristoylglucosamine and acetate, the committed step in lipid A biosynthesis. This Aquifex aeolicus (strain VF5) protein is UDP-3-O-acyl-N-acetylglucosamine deacetylase.